The sequence spans 120 residues: Large ribosomal subunit protein uL18 (120 aa).

This sequence belongs to the universal ribosomal protein uL18 family. In terms of assembly, part of the 50S ribosomal subunit; part of the 5S rRNA/L5/L18/L25 subcomplex. Contacts the 5S and 23S rRNAs.

Functionally, this is one of the proteins that bind and probably mediate the attachment of the 5S RNA into the large ribosomal subunit, where it forms part of the central protuberance. The sequence is that of Large ribosomal subunit protein uL18 from Rhodopseudomonas palustris (strain BisA53).